The sequence spans 299 residues: Glycine--tRNA ligase alpha subunit (299 aa).

Belongs to the class-II aminoacyl-tRNA synthetase family. As to quaternary structure, tetramer of two alpha and two beta subunits.

It is found in the cytoplasm. It catalyses the reaction tRNA(Gly) + glycine + ATP = glycyl-tRNA(Gly) + AMP + diphosphate. The sequence is that of Glycine--tRNA ligase alpha subunit from Laribacter hongkongensis (strain HLHK9).